Reading from the N-terminus, the 249-residue chain is MPFEIVFDGAKEFADLIDTASNLIDEAAFKIAEEGMSMRAMDPSRVVLLDLNLPASIFSKYDIDGEETVGVNMDHFKKVLKRGKGKDILVLRKGEENFLEITLEGTAKRTFRLPLIEVEELELDLPELPFTVRAVILGEVLKEAVKDASLVSDSIKFIAKENEFIMKAEGETQEVEIKLTLEDEGLLDLNVEEETKSAYGVSYLADMAKGIGKADEVVLRFGNEMPLQMDYPIRDEGRLTFLLAPRVEE.

This sequence belongs to the PCNA family. Homotrimer. The subunits circularize to form a toroid; DNA passes through its center. Replication factor C (RFC) is required to load the toroid on the DNA.

Sliding clamp subunit that acts as a moving platform for DNA processing. Responsible for tethering the catalytic subunit of DNA polymerase and other proteins to DNA during high-speed replication. The polypeptide is DNA polymerase sliding clamp (Thermococcus sibiricus (strain DSM 12597 / MM 739)).